We begin with the raw amino-acid sequence, 92 residues long: Small ribosomal subunit protein bS20 (92 aa).

The disordered stretch occupies residues 1 to 25 (MANSAQARKRARQAAKANSHNSALR).

This sequence belongs to the bacterial ribosomal protein bS20 family.

Its function is as follows. Binds directly to 16S ribosomal RNA. The chain is Small ribosomal subunit protein bS20 from Paraburkholderia phymatum (strain DSM 17167 / CIP 108236 / LMG 21445 / STM815) (Burkholderia phymatum).